A 470-amino-acid polypeptide reads, in one-letter code: PTS system trehalose-specific EIIBC component (470 aa).

The 88-residue stretch at Met-1–Thr-88 folds into the PTS EIIB type-1 domain. The active-site Phosphocysteine intermediate; for EIIB activity is the Cys-27. Position 27 is a phosphocysteine; by EIIA (Cys-27). Positions Lys-108–Lys-470 constitute a PTS EIIC type-1 domain. The next 10 helical transmembrane spans lie at Leu-110–Ile-130, Ile-160–Val-180, Phe-183–Leu-203, Gly-234–Thr-254, Leu-263–Gly-283, Phe-301–Ile-321, His-326–Trp-346, Pro-347–Val-367, Phe-403–Leu-423, and Trp-443–Ala-463.

It is found in the cell membrane. It catalyses the reaction alpha,alpha-trehalose(out) + N(pros)-phospho-L-histidyl-[protein] = alpha,alpha-trehalose 6-phosphate(in) + L-histidyl-[protein]. In terms of biological role, the phosphoenolpyruvate-dependent sugar phosphotransferase system (sugar PTS), a major carbohydrate active transport system, catalyzes the phosphorylation of incoming sugar substrates concomitantly with their translocation across the cell membrane. This system is involved in trehalose transport. This chain is PTS system trehalose-specific EIIBC component (treP), found in Bacillus subtilis (strain 168).